The chain runs to 230 residues: Demethylmenaquinone methyltransferase (230 aa).

Residues threonine 62, aspartate 80, 102–103 (DG), and serine 119 each bind S-adenosyl-L-methionine.

This sequence belongs to the class I-like SAM-binding methyltransferase superfamily. MenG/UbiE family.

The catalysed reaction is a 2-demethylmenaquinol + S-adenosyl-L-methionine = a menaquinol + S-adenosyl-L-homocysteine + H(+). The protein operates within quinol/quinone metabolism; menaquinone biosynthesis; menaquinol from 1,4-dihydroxy-2-naphthoate: step 2/2. Its function is as follows. Methyltransferase required for the conversion of demethylmenaquinol (DMKH2) to menaquinol (MKH2). The polypeptide is Demethylmenaquinone methyltransferase (Streptomyces griseus subsp. griseus (strain JCM 4626 / CBS 651.72 / NBRC 13350 / KCC S-0626 / ISP 5235)).